The following is a 478-amino-acid chain: Lipoprotein lipase (478 aa).

A signal peptide spans 1 to 27; sequence MESKVLLLLALSVWLQSLTVSRGGLVA. The segment at 35–56 is interaction with GPIHBP1; it reads KDFRDIESKFALRTPEDTAEDT. Cys57 and Cys70 are oxidised to a cystine. An N-linked (GlcNAc...) asparagine glycan is attached at Asn73. A 3'-nitrotyrosine modification is found at Tyr124. The active-site Nucleophile is the Ser162. Asp186 acts as the Charge relay system in catalysis. 3'-nitrotyrosine is present on Tyr194. Ca(2+) is bound by residues Ala197, Arg200, Ser202, and Asp205. The cysteines at positions 246 and 269 are disulfide-linked. Residues 246-269 are essential for determining substrate specificity; that stretch reads CNIGEALRVIAERGLGDVDQLVKC. Catalysis depends on His271, which acts as the Charge relay system. Disulfide bonds link Cys294–Cys313 and Cys305–Cys308. A PLAT domain is found at 344–467; the sequence is FHYQVKIHFS…KGKSPVIFVK (124 aa). Tyr346 is modified (3'-nitrotyrosine). N-linked (GlcNAc...) asparagine glycosylation is present at Asn389. The segment at 420–424 is important for interaction with lipoprotein particles; the sequence is WSNWW. Positions 433–437 are important for heparin binding; that stretch reads KIRVK. An interaction with GPIHBP1 region spans residues 446–470; sequence IFCSREKMSYLQKGKSPVIFVKCHD. A disulfide bridge connects residues Cys448 and Cys468.

The protein belongs to the AB hydrolase superfamily. Lipase family. In terms of assembly, homodimer. Interacts with GPIHBP1 with 1:1 stoichiometry. Interacts with APOC2; the interaction activates LPL activity in the presence of lipids. Interaction with heparan sulfate proteoglycans is required to protect LPL against loss of activity. Associates with lipoprotein particles in blood plasma. Interacts with LMF1 and SEL1L; interaction with SEL1L is required to prevent aggregation of newly synthesized LPL in the endoplasmic reticulum (ER), and for normal export of LPL from the ER to the extracellular space. Interacts with SORL1; SORL1 acts as a sorting receptor, promoting LPL localization to endosomes and later to lysosomes, leading to degradation of newly synthesized LPL. Tyrosine nitration after lipopolysaccharide (LPS) challenge down-regulates the lipase activity.

The protein localises to the cell membrane. Its subcellular location is the secreted. It localises to the extracellular space. It is found in the extracellular matrix. The catalysed reaction is a triacylglycerol + H2O = a diacylglycerol + a fatty acid + H(+). It catalyses the reaction a 1,2-diacyl-sn-glycero-3-phosphocholine + H2O = a 2-acyl-sn-glycero-3-phosphocholine + a fatty acid + H(+). The enzyme catalyses 1,2,3-tri-(9Z-octadecenoyl)-glycerol + H2O = di-(9Z)-octadecenoylglycerol + (9Z)-octadecenoate + H(+). It carries out the reaction 1,2-di-(9Z-octadecenoyl)-sn-glycero-3-phosphocholine + H2O = (9Z-octadecenoyl)-sn-glycero-3-phosphocholine + (9Z)-octadecenoate + H(+). The catalysed reaction is 1,2,3-tributanoylglycerol + H2O = dibutanoylglycerol + butanoate + H(+). It catalyses the reaction 1,2-dihexadecanoyl-sn-glycero-3-phosphocholine + H2O = hexadecanoyl-sn-glycero-3-phosphocholine + hexadecanoate + H(+). The apolipoprotein APOC2 acts as a coactivator of LPL activity. Ca(2+) binding promotes protein stability and formation of the active homodimer. Interaction with GPIHBP1 protects LPL against inactivation by ANGPTL4. Functionally, key enzyme in triglyceride metabolism. Catalyzes the hydrolysis of triglycerides from circulating chylomicrons and very low density lipoproteins (VLDL), and thereby plays an important role in lipid clearance from the blood stream, lipid utilization and storage. Although it has both phospholipase and triglyceride lipase activities it is primarily a triglyceride lipase with low but detectable phospholipase activity. Mediates margination of triglyceride-rich lipoprotein particles in capillaries. Recruited to its site of action on the luminal surface of vascular endothelium by binding to GPIHBP1 and cell surface heparan sulfate proteoglycans. This Ovis aries (Sheep) protein is Lipoprotein lipase (LPL).